The chain runs to 1369 residues: MGSLTRAEEEETAAAEEWSGEAVVYVNGVRRVLPDGLAHLTLLQYLRDIGLPGTKLGCGEGGCGACTVMVSCYDQTTKKTQHFAINACLAPLYSVEGMHIITVEGIGNRQRGLHPIQERLAMAHGSQCGFCTPGFVMSMYALLRSSEQPPTEEQIEDSLAGNLCRCTGYRPIIDAFRVFSKRDDLLYNNSSLKNADGRPICPSTGKPCSCGDQKDINGSESSLLTPTKSYSPCSYNEIDGNAYSEKELIFPPELQLRKVTSLKLNGFNGIRWYRPLKLKQVLHLKACYPNAKLIIGNSEVGVETKFKNAQYKVLISVTHVPELHTLKVKEDGIHIGSSVRLAQLQNFLRKVILERDSHEISSCEAILRQLKWFAGTQIRNVASVGGNICTASPISDLNPLWMATGATFEIIDVNNNIRTIPAKDFFLGYRKVDLKPDEILLSVILPWTRPFEFVKEFKQAHRREDDIALVNAGMRVYIRKVEGDWIISDVSIIYGGVAAVSHRASKTETFLTGKKWDYGLLDKTFDLLKEDVVLAENAPGGMVEFRSSLTLSFFFKFFLHVTHEMNIKGFWKDGLHATNLSAIQSFTRPVGVGTQCYELVRQGTAVGQPVVHTSAMLQVTGEAEYTDDTPTPPNTLHAALVLSTKAHARILSIDASLAKSSPGFAGLFLSKDVPGANHTGPVIHDEEVFASDVVTCVGQIVGLVVADTRDNAKAAANKVNIEYSELPAILSIEEAVKAGSFHPNSKRCLVKGNVEQCFLSGACDRIIEGKVQVGGQEHFYMEPQSTLVWPVDSGNEIHMISSTQAPQKHQKYVANVLGLPQSRVVCKTKRIGGGFGGKETRSAIFAAAASVAAYCLRQPVKLVLDRDIDMMTTGQRHSFLGKYKVGFTDDGKILALDLDVYNNGGHSHDLSLPVLERAMFHSDNVYDIPNVRVNGQVCFTNFPSNTAFRGFGGPQAMLIAENWIQHMATELKRSPEEIKELNFQSEGSVLHYGQLLQNCTIHSVWDELKVSCNFMEARKAVIDFNNNNRWRKRGIAMVPTKFGISFTTKFMNQAGALVQVYTDGTVLVTHGGVEMGQGLHTKVAQVAASSFNIPLSSIFISETSTDKVPNATPTAASASSDLYGAAVLDACQQIMARMEPVASRGNHKSFAELVLACYLERIDLSAHGFYITPDVGFDWVSGKGTPFYYFTYGAAFAEVEIDTLTGDFHTRTVDIVMDLGCSINPAIDIGQIEGGFIQGLGWAALEELKWGDDNHKWIRPGHLFTCGPGSYKIPSVNDIPLNFKVSLLKGVLNPKVIHSSKAVGEPPFFLGSAVLFAIKDAISAARAEEGHFDWFPLDSPATPERIRMACVDSITKKFASVYYRPKLSV.

The 2Fe-2S ferredoxin-type domain occupies 20–106 (GEAVVYVNGV…GMHIITVEGI (87 aa)). Residues C58, C63, C66, C88, C128, C131, C164, and C166 each contribute to the [2Fe-2S] cluster site. The FAD-binding PCMH-type domain maps to 265-450 (NGFNGIRWYR…LSVILPWTRP (186 aa)). FAD is bound by residues 293–300 (LIIGNSEV), F373, 383–387 (SVGGN), D396, L440, and K458. Mo-molybdopterin is bound by residues Q804 and F835. Positions 839 and 917 each coordinate substrate. R949 is a Mo-molybdopterin binding site. Positions 951 and 1047 each coordinate substrate. A1116 is a Mo-molybdopterin binding site. Catalysis depends on E1305, which acts as the Proton acceptor.

It belongs to the xanthine dehydrogenase family. Homodimer. The cofactor is [2Fe-2S] cluster. It depends on FAD as a cofactor. Mo-molybdopterin serves as cofactor.

The enzyme catalyses xanthine + NAD(+) + H2O = urate + NADH + H(+). It catalyses the reaction hypoxanthine + NAD(+) + H2O = xanthine + NADH + H(+). In terms of biological role, key enzyme involved in purine catabolism. Catalyzes the oxidation of hypoxanthine to xanthine and the oxidation of xanthine to urate. This chain is Xanthine dehydrogenase (XDH), found in Oryza sativa subsp. japonica (Rice).